Consider the following 644-residue polypeptide: Arginine--tRNA ligase (644 aa).

Residues A129–H139 carry the 'HIGH' region motif.

Belongs to the class-I aminoacyl-tRNA synthetase family.

It localises to the cytoplasm. The catalysed reaction is tRNA(Arg) + L-arginine + ATP = L-arginyl-tRNA(Arg) + AMP + diphosphate. The sequence is that of Arginine--tRNA ligase (argS) from Aeropyrum pernix (strain ATCC 700893 / DSM 11879 / JCM 9820 / NBRC 100138 / K1).